Consider the following 213-residue polypeptide: Glutamine amidotransferase-like class 1 domain-containing protein 1 (213 aa).

A signal peptide spans 1–20 (MTSKPTCLIVASAASAGVSA).

This sequence belongs to the peptidase C56 family. In terms of assembly, homotetramer. Component of the FERRY complex.

The protein localises to the secreted. The protein resides in the early endosome. In terms of biological role, component of the FERRY complex (Five-subunit Endosomal Rab5 and RNA/ribosome intermediary). The FERRY complex directly interacts with mRNAs and RAB5A, and functions as a RAB5A effector involved in the localization and the distribution of specific mRNAs most likely by mediating their endosomal transport. The complex recruits mRNAs and ribosomes to early endosomes through direct mRNA-interaction. The protein is Glutamine amidotransferase-like class 1 domain-containing protein 1 of Danio rerio (Zebrafish).